The following is a 448-amino-acid chain: Tapasin (448 aa).

An N-terminal signal peptide occupies residues 1–20 (MKSLSLLLAVALGLATAVSA). The Lumenal segment spans residues 21–414 (GPAVIECWFV…LSGPSLEDSI (394 aa)). Cys27 and Cys91 are disulfide-bonded. Asn253 is a glycosylation site (N-linked (GlcNAc...) asparagine). Positions 292-399 (PKVSLMPATL…PASGRSAEVT (108 aa)) constitute an Ig-like C1-type domain. The cysteines at positions 315 and 382 are disulfide-linked. A helical transmembrane segment spans residues 415-435 (GLFLSAFFLLGLFKALGWAAV). Residues 436 to 448 (YLSTCKDSKKKAE) are Cytoplasmic-facing.

As to quaternary structure, heterodimer with PDIA3; disulfide-linked. Obligatory mediator for the interaction between newly assembled MHC class I molecules, calreticulin, PDIA3 and TAP. Up to 4 MHC class I/tapasin complexes bind to 1 TAP. Interacts with HLA-G-B2M complex; this interaction is required for loading of high affinity peptides. On its own or as part of MHC class I peptide loading complex, interacts with ligand-free MR1 or MR1-B2M complex, providing for stable MR1 pools ready for metabolite antigen processing.

The protein resides in the endoplasmic reticulum membrane. In terms of biological role, involved in the association of MHC class I with transporter associated with antigen processing (TAP) and in the assembly of MHC class I with peptide (peptide loading). The chain is Tapasin (TAPBP) from Chlorocebus aethiops (Green monkey).